Consider the following 243-residue polypeptide: Probable 2-phosphosulfolactate phosphatase (243 aa).

It belongs to the ComB family. Mg(2+) serves as cofactor.

The catalysed reaction is (2R)-O-phospho-3-sulfolactate + H2O = (2R)-3-sulfolactate + phosphate. In Synechococcus sp. (strain CC9605), this protein is Probable 2-phosphosulfolactate phosphatase.